We begin with the raw amino-acid sequence, 261 residues long: Chitinase 8 (261 aa).

The N-terminal stretch at 1-29 is a signal peptide; sequence MTTTTTRFVQLAACAAASLLAVAASGAAA. Disulfide bonds link cysteine 53–cysteine 115 and cysteine 221–cysteine 253. Catalysis depends on glutamate 98, which acts as the Proton donor.

This sequence belongs to the glycosyl hydrolase 19 family. Chitinase class II subfamily. As to expression, expressed in roots, leaves, sheaths and meristems.

It catalyses the reaction Random endo-hydrolysis of N-acetyl-beta-D-glucosaminide (1-&gt;4)-beta-linkages in chitin and chitodextrins.. This is Chitinase 8 (Cht8) from Oryza sativa subsp. japonica (Rice).